The following is a 1207-amino-acid chain: Disease resistance protein RPP2B (1207 aa).

The TIR domain occupies Cys-15–Leu-180. The active site involves Glu-89. The 245-residue stretch at Glu-201–Ser-445 folds into the NB-ARC domain. 9 LRR repeats span residues Pro-607–Thr-630, Ala-653–Met-676, Asn-677–Ile-699, Ser-720–Leu-743, His-744–Leu-767, Ser-769–Met-791, Glu-792–Asn-815, Asn-840–Ser-862, and Leu-863–Leu-886.

This sequence belongs to the disease resistance TIR-NB-LRR family.

It carries out the reaction NAD(+) + H2O = ADP-D-ribose + nicotinamide + H(+). Functionally, disease resistance protein that cooperates with RPP2A to confer resistance to Hyaloperonospora parasitica isolate Cala2. The polypeptide is Disease resistance protein RPP2B (Arabidopsis thaliana (Mouse-ear cress)).